Here is a 1368-residue protein sequence, read N- to C-terminus: MHLQNTHNTMESNAAMDAASPASRDVRQFHDLITCRLCRGYMIDPTTVDYCYHTYCRSCILKHLLRAVYCPECKASGGKEINELNLKSDDTLRSLIYKLVPGLYQRECKELADFKEQHDLVDEQTTDEPEFFTTTELISLSLEYHPAMLHQCGPGEVPPTIYLQCAAGLPVELLKRFLCSKYNIETDNGLVEVEVTYKDEVLPTNFTLMDVAYCYNWSRESPMAFCYRILLYDNEQTKNDENNLSRINQDIEPEHSVRRSKSAKSVTFAEDLESEIDSGSPRSKVRCKTPPKVSPSSKNKRLTSSKREAEPESPVSNFKSLRSNDMRYSDYAVSKVKSEPEQEQFLLPREREQQPLEANTNIVVSIPPSQLRKSYVDAEDFELKTANRKGVGHLPKLKIELNSMKSKLSMPLSAGPRLEDTSCSLSCSAQQLDLETYAKNIGLKPIEQPLQQSASNPDSKYSPNASPMSSCSSSTNGSSSSLGTADASTSTSTSSSHRKRKKKHSKEPKDANGKRKKLHAEISSQTDGKMKVKITAKPNHKLDFKRSHSLASGELDLQKLKLDSTSTSEALNRTLGEEARSINSLVVGGAPTPPPTPTAEPEQQQQQQQQQQQPQQQQQQQQQQQQQQQFVVLPKIKDLTLPTSPPLPPSLFKAYTPSTTPTAPHTVAGGKPKQQQQQMPQQPQAVLQQSLAKTNPAKPPLSSNNNRKPNSGHFAVPQAPTHRNMYHMQRYQSTPSSIASAANKMPKRSMSLDESHPAKQARLSQAQAMASSYAAKLHMQTSNQAKSQAAAFLPNPQMRSYGLPDLGSKPTLPMLCPASSSSQVTITPRPRATPSIYSFSEPNIHVPALEIVRLPVNKQSAGGKGLTMPPLSPPATSSARLMGPPAALPKHAGHGHGAAKRSCQMPTMPMPLPLPLPMPMTTIPAIVKSPPLSVALSGQRNNKGNSSNSNAYRTSPPALINLRNTAAPQHSFPSKSSPKVEANSKKSPPAAGCQGKTNGTAALDKSKTSLREFRPAVQSAVTATATTSVTTAAGAGAGAGTGTGTALAKDADILDLSANPGRSNNDAKLAPNSPPAGNNNNNNNNNNNNNNNNNNNNNNSTSNSLEAALNKIKQNISANSNGGPSTTSGSNSNGTTNGDDLQNLHMLSESATAREKISIKAASSGNGSGSTSSSSAKPKNANALVRPQNASVRSIPNPSALAFRNQPAAASTAASISKPLTVRAEEKPKVSTSNPGSLSPTNTSSSSSSSSSGSSGCSAATSPRAMTKKPTTIDQVAANLNIRAEAKAAALAEEAPPVLSSNAAKSPELAKTTTAVALRPEPKETPITVSAASTLLTIPSAVSSVSAVPETMAKPPVQIANAPVASSA.

Residues 35-74 (CRLCRGYMIDPTTVDYCYHTYCRSCILKHLLRAVYCPECK) form an RING-type zinc finger. 10 disordered regions span residues 245–321 (SRIN…FKSL), 448–628 (QPLQ…QQQQ), 640–718 (TLPT…AVPQ), 861–903 (AGGK…KRSC), 935–1001 (ALSG…NGTA), 1057–1103 (SANP…STSN), 1116–1141 (ISAN…GDDL), 1161–1193 (AASS…ASVR), 1211–1271 (STAA…KKPT), and 1298–1322 (VLSS…RPEP). Residues 449 to 461 (PLQQSASNPDSKY) show a composition bias toward polar residues. The segment covering 462–495 (SPNASPMSSCSSSTNGSSSSLGTADASTSTSTSS) has biased composition (low complexity). The span at 496–506 (SHRKRKKKHSK) shows a compositional bias: basic residues. Low complexity-rich tracts occupy residues 599–628 (AEPE…QQQQ) and 672–689 (PKQQ…VLQQ). 2 stretches are compositionally biased toward polar residues: residues 936–953 (LSGQ…NAYR) and 962–977 (LRNT…SKSS). 4 stretches are compositionally biased toward low complexity: residues 1078–1099 (NNNN…NNNN), 1119–1138 (NSNG…TTNG), 1161–1183 (AASS…NANA), and 1231–1263 (STSN…ATSP).

It localises to the nucleus. Functionally, regulates expression of the homeotic selector genes by influencing higher-order chromatin structure through interaction with other proteins. The sequence is that of Protein suppressor 2 of zeste (Su(z)2) from Drosophila melanogaster (Fruit fly).